Reading from the N-terminus, the 126-residue chain is Large ribosomal subunit protein bL12 (126 aa).

This sequence belongs to the bacterial ribosomal protein bL12 family. As to quaternary structure, homodimer. Part of the ribosomal stalk of the 50S ribosomal subunit. Forms a multimeric L10(L12)X complex, where L10 forms an elongated spine to which 2 to 4 L12 dimers bind in a sequential fashion. Binds GTP-bound translation factors.

In terms of biological role, forms part of the ribosomal stalk which helps the ribosome interact with GTP-bound translation factors. Is thus essential for accurate translation. This Methylorubrum populi (strain ATCC BAA-705 / NCIMB 13946 / BJ001) (Methylobacterium populi) protein is Large ribosomal subunit protein bL12.